The sequence spans 112 residues: Putative pterin-4-alpha-carbinolamine dehydratase (112 aa).

Positions 1 to 30 are disordered; it reads MSDELQSRTCTPCRGDVPPMTKAEAKRQLA.

It belongs to the pterin-4-alpha-carbinolamine dehydratase family.

The catalysed reaction is (4aS,6R)-4a-hydroxy-L-erythro-5,6,7,8-tetrahydrobiopterin = (6R)-L-erythro-6,7-dihydrobiopterin + H2O. This Aromatoleum aromaticum (strain DSM 19018 / LMG 30748 / EbN1) (Azoarcus sp. (strain EbN1)) protein is Putative pterin-4-alpha-carbinolamine dehydratase.